Reading from the N-terminus, the 609-residue chain is PTS system beta-glucoside-specific EIIBCA component (609 aa).

Residues 1–86 (MDYDKLSKDI…VRHSNLSDEK (86 aa)) enclose the PTS EIIB type-1 domain. Catalysis depends on Cys-26, which acts as the Phosphocysteine intermediate; for EIIB activity. The PTS EIIC type-1 domain maps to 103–459 (DVISGVFTPI…GSQQPAVHEG (357 aa)). 10 consecutive transmembrane segments (helical) span residues 112 to 132 (ILPA…AVTF), 141 to 161 (VHVI…LLLA), 174 to 194 (VAAA…LGAG), 202 to 222 (LPVT…SIWI), 246 to 266 (FTLL…GAIL), 281 to 301 (AGLV…MTGM), 321 to 341 (LLPA…AVFL), 351 to 371 (LALT…MYGV), 379 to 399 (FAAA…TGVA), and 412 to 432 (IPVF…IAFA). Residues 480 to 584 (DGVFSAGVMG…DVITPVIVTN (105 aa)) form the PTS EIIA type-1 domain. His-532 serves as the catalytic Tele-phosphohistidine intermediate; for EIIA activity.

It is found in the cell membrane. Its function is as follows. The phosphoenolpyruvate-dependent sugar phosphotransferase system (sugar PTS), a major carbohydrate active -transport system, catalyzes the phosphorylation of incoming sugar substrates concomitantly with their translocation across the cell membrane. This system is involved in beta-glucoside transport. The polypeptide is PTS system beta-glucoside-specific EIIBCA component (bglP) (Bacillus subtilis (strain 168)).